Here is a 289-residue protein sequence, read N- to C-terminus: MKDRLEQLKAKQLTQDDDTDEVEIAIDNTAFMDEFFSEIEETRLNIDKISEHVEEAKKLYSIILSAPIPEPKTKDDLEQLTTEIKKRANNVRNKLKSMEKHIEEDEVRSSADLRIRKSQHSVLSRKFVEVMTKYNEAQVDFRERSKGRIQRQLEITGKKTTDEELEEMLESGNPAIFTSGIIDSQISKQALSEIEGRHKDIVRLESSIKELHDMFMDIAMLVENQGEMLDNIELNVMHTVDHVEKARDETKRAMKYQGQARKKLIIIIVIVVVLLGILALIIGLSVGLK.

Over 1 to 263 (MKDRLEQLKA…MKYQGQARKK (263 aa)) the chain is Cytoplasmic. The stretch at 32 to 111 (MDEFFSEIEE…IEEDEVRSSA (80 aa)) forms a coiled coil. In terms of domain architecture, t-SNARE coiled-coil homology spans 191 to 253 (LSEIEGRHKD…EKARDETKRA (63 aa)). The chain crosses the membrane as a helical; Anchor for type IV membrane protein span at residues 264-284 (LIIIIVIVVVLLGILALIIGL). The Extracellular portion of the chain corresponds to 285 to 289 (SVGLK).

This sequence belongs to the syntaxin family. Interacts with REEP6. Interacts with PRPH2 in rod and cone photoreceptors. Interacts with ROM1. Interacts with SNAP25. Interacts with VAMP2. As to expression, heart, spleen, lung and kidney.

The protein resides in the membrane. Functionally, potentially involved in docking of synaptic vesicles at presynaptic active zones. Apical receptor involved in membrane fusion of apical vesicles. Essential for survival of retinal photoreceetors. The protein is Syntaxin-3 (Stx3) of Rattus norvegicus (Rat).